The primary structure comprises 222 residues: Deoxyribose-phosphate aldolase (222 aa).

Asp-89 (proton donor/acceptor) is an active-site residue. Lys-152 acts as the Schiff-base intermediate with acetaldehyde in catalysis. Lys-181 (proton donor/acceptor) is an active-site residue.

The protein belongs to the DeoC/FbaB aldolase family. DeoC type 1 subfamily.

Its subcellular location is the cytoplasm. The enzyme catalyses 2-deoxy-D-ribose 5-phosphate = D-glyceraldehyde 3-phosphate + acetaldehyde. The protein operates within carbohydrate degradation; 2-deoxy-D-ribose 1-phosphate degradation; D-glyceraldehyde 3-phosphate and acetaldehyde from 2-deoxy-alpha-D-ribose 1-phosphate: step 2/2. Catalyzes a reversible aldol reaction between acetaldehyde and D-glyceraldehyde 3-phosphate to generate 2-deoxy-D-ribose 5-phosphate. The sequence is that of Deoxyribose-phosphate aldolase from Clostridium novyi (strain NT).